The primary structure comprises 435 residues: Probable aminotransferase gliI (435 aa).

At lysine 266 the chain carries N6-(pyridoxal phosphate)lysine.

This sequence belongs to the class-I pyridoxal-phosphate-dependent aminotransferase family. The cofactor is pyridoxal 5'-phosphate.

It participates in mycotoxin biosynthesis. In terms of biological role, probable aminotransferase; part of the gene cluster that mediates the biosynthesis of gliotoxin, a member of the epipolythiodioxopiperazine (ETP) class of toxins characterized by a disulfide bridged cyclic dipeptide. The first step in gliotoxin biosynthesis is the condensation of serine and phenylalanine to form the cyclo-L-phenylalanyl-L-serine diketopiperazine (DKP) by the NRPS gliP. GliP is also able to produce the DKP cyclo-L-tryptophanyl-L-serine, suggesting that the substrate specificity of the first adenylation (A) domain in gliP is sufficiently relaxed to accommodate both L-Phe and L-Trp. The cytochrome P450 monooxygenase gliC has been shown to catalyze the subsequent hydroxylation of the alpha-carbon of L-Phe in cyclo-L-phenylalanyl-L-serine whereas the second cytochrome P450 enzyme, gliF, is presumably involved in the modification of the DKP side chain. The glutathione S-transferase (GST) gliG then forms a bis-glutathionylated biosynthetic intermediate which is responsible for the sulfurization of gliotoxin. This bis-glutathionylated intermediate is subsequently processed by the gamma-glutamyl cyclotransferase gliK to remove both gamma-glutamyl moieties. Subsequent processing via gliI yields a biosynthetic intermediate, which is N-methylated via the N-methyltransferase gliN, before the gliotoxin oxidoreductase gliT-mediated disulfide bridge closure. GliN-mediated amide methylation confers stability to ETP, damping the spontaneous formation of tri- and tetrasulfides. Intracellular dithiol gliotoxin oxidized by gliT is subsequently effluxed by gliA. Gliotoxin contributes to pathogenesis during invasive aspergillosis. In macrophages and neutrophils, gliotoxin showed inhibition of various different cell functions including cytokine production, antigen presentation, phagocytosis, and production of reactive oxygen species. The polypeptide is Probable aminotransferase gliI (Aspergillus fumigatus (strain ATCC MYA-4609 / CBS 101355 / FGSC A1100 / Af293) (Neosartorya fumigata)).